Reading from the N-terminus, the 203-residue chain is Phospho-2-dehydro-3-deoxyheptonate aldolase (203 aa).

The segment covering 1-10 has biased composition (basic and acidic residues); that stretch reads MIDRLVRDSR. The interval 1-28 is disordered; that stretch reads MIDRLVRDSRGPVTERNPPHMSLSAGPA.

The protein belongs to the class-I DAHP synthase family.

The enzyme catalyses D-erythrose 4-phosphate + phosphoenolpyruvate + H2O = 7-phospho-2-dehydro-3-deoxy-D-arabino-heptonate + phosphate. It participates in metabolic intermediate biosynthesis; chorismate biosynthesis; chorismate from D-erythrose 4-phosphate and phosphoenolpyruvate: step 1/7. In terms of biological role, stereospecific condensation of phosphoenolpyruvate (PEP) and D-erythrose-4-phosphate (E4P) giving rise to 3-deoxy-D-arabino-heptulosonate-7-phosphate (DAHP). In Amycolatopsis methanolica, this protein is Phospho-2-dehydro-3-deoxyheptonate aldolase (aroA).